Here is a 296-residue protein sequence, read N- to C-terminus: Protoheme IX farnesyltransferase (296 aa).

Transmembrane regions (helical) follow at residues 11-31, 35-55, 84-104, 107-127, 132-152, 162-182, 208-228, 229-249, and 264-284; these read PGII…AAQG, YPLF…GCVF, VTLV…YVAA, LAMW…SLYM, VYGT…GYCA, LILL…IAIF, ITLY…GGYA, GYKY…MALS, and LFVF…VDSM.

This sequence belongs to the UbiA prenyltransferase family. Protoheme IX farnesyltransferase subfamily.

It localises to the cell inner membrane. The enzyme catalyses heme b + (2E,6E)-farnesyl diphosphate + H2O = Fe(II)-heme o + diphosphate. It functions in the pathway porphyrin-containing compound metabolism; heme O biosynthesis; heme O from protoheme: step 1/1. In terms of biological role, converts heme B (protoheme IX) to heme O by substitution of the vinyl group on carbon 2 of heme B porphyrin ring with a hydroxyethyl farnesyl side group. In Pectobacterium atrosepticum (strain SCRI 1043 / ATCC BAA-672) (Erwinia carotovora subsp. atroseptica), this protein is Protoheme IX farnesyltransferase.